The following is a 116-amino-acid chain: Protein Rev (116 aa).

A phosphoserine; by host CK2 mark is found at Ser-5 and Ser-8. The segment at Leu-18 to Asn-26 is homomultimerization. The interval Tyr-23–Gln-49 is disordered. The short motif at Thr-34–Arg-50 is the Nuclear localization signal and RNA-binding (RRE) element. The segment covering Gln-36 to Glu-47 has biased composition (basic residues). The short motif at Leu-73 to Asp-84 is the Nuclear export signal and binding to XPO1 element. Residues Ser-92 and Ser-99 each carry the phosphoserine; by host modification.

Belongs to the HIV-1 REV protein family. As to quaternary structure, homomultimer; when bound to the RRE. Multimeric assembly is essential for activity and may involve XPO1. Binds to human KPNB1, XPO1, TNPO1, RANBP5 and IPO7. Interacts with the viral Integrase. Interacts with human KHDRBS1. Interacts with human NAP1; this interaction decreases Rev multimerization and stimulates its activity. Interacts with human DEAD-box helicases DDX3 and DDX24; these interactions may serve for viral RNA export to the cytoplasm and packaging, respectively. Interacts with human PSIP1; this interaction may inhibit HIV-1 DNA integration by promoting dissociation of the Integrase-LEDGF/p75 complex. Asymmetrically arginine dimethylated at one site by host PRMT6. Methylation impairs the RNA-binding activity and export of viral RNA from the nucleus to the cytoplasm. In terms of processing, phosphorylated by protein kinase CK2. Presence of, and maybe binding to the N-terminus of the regulatory beta subunit of CK2 is necessary for CK2-mediated Rev's phosphorylation.

It localises to the host nucleus. It is found in the host nucleolus. Its subcellular location is the host cytoplasm. Functionally, escorts unspliced or incompletely spliced viral pre-mRNAs (late transcripts) out of the nucleus of infected cells. These pre-mRNAs carry a recognition sequence called Rev responsive element (RRE) located in the env gene, that is not present in fully spliced viral mRNAs (early transcripts). This function is essential since most viral proteins are translated from unspliced or partially spliced pre-mRNAs which cannot exit the nucleus by the pathway used by fully processed cellular mRNAs. Rev itself is translated from a fully spliced mRNA that readily exits the nucleus. Rev's nuclear localization signal (NLS) binds directly to KPNB1/Importin beta-1 without previous binding to KPNA1/Importin alpha-1. KPNB1 binds to the GDP bound form of RAN (Ran-GDP) and targets Rev to the nucleus. In the nucleus, the conversion from Ran-GDP to Ran-GTP dissociates Rev from KPNB1 and allows Rev's binding to the RRE in viral pre-mRNAs. Rev multimerization on the RRE via cooperative assembly exposes its nuclear export signal (NES) to the surface. Rev can then form a complex with XPO1/CRM1 and Ran-GTP, leading to nuclear export of the complex. Conversion from Ran-GTP to Ran-GDP mediates dissociation of the Rev/RRE/XPO1/RAN complex, so that Rev can return to the nucleus for a subsequent round of export. Beside KPNB1, also seems to interact with TNPO1/Transportin-1, RANBP5/IPO5 and IPO7/RANBP7 for nuclear import. The nucleoporin-like HRB/RIP is an essential cofactor that probably indirectly interacts with Rev to release HIV RNAs from the perinuclear region to the cytoplasm. The polypeptide is Protein Rev (Human immunodeficiency virus type 1 group M subtype B (isolate HXB3) (HIV-1)).